The chain runs to 540 residues: Chaperonin GroEL (540 aa).

Residues 29–32 (TLGP), 86–90 (DGTTT), glycine 413, 476–478 (NAA), and aspartate 492 each bind ATP.

Belongs to the chaperonin (HSP60) family. As to quaternary structure, forms a cylinder of 14 subunits composed of two heptameric rings stacked back-to-back. Interacts with the co-chaperonin GroES.

The protein resides in the cytoplasm. The enzyme catalyses ATP + H2O + a folded polypeptide = ADP + phosphate + an unfolded polypeptide.. Its function is as follows. Together with its co-chaperonin GroES, plays an essential role in assisting protein folding. The GroEL-GroES system forms a nano-cage that allows encapsulation of the non-native substrate proteins and provides a physical environment optimized to promote and accelerate protein folding. This chain is Chaperonin GroEL, found in Streptococcus pneumoniae (strain P1031).